The following is a 652-amino-acid chain: Carboxypeptidase Z (652 aa).

Residues 1-18 (MPPPLPLLLLTVLVVAAA) form the signal peptide. An FZ domain is found at 27–160 (NPAGECHRPP…TREDEGCYDP (134 aa)). 5 disulfide bridges follow: Cys-43/Cys-109, Cys-51/Cys-102, Cys-93/Cys-129, Cys-118/Cys-157, and Cys-122/Cys-146. The region spanning 186-502 (SHHSYAQMVR…ESLLNFVETV (317 aa)) is the Peptidase M14 domain. Positions 248 and 251 each coordinate Zn(2+). The N-linked (GlcNAc...) asparagine glycan is linked to Asn-281. Zn(2+) is bound at residue His-380. The Proton donor/acceptor role is filled by Glu-472. The segment at 595–629 (LRRTGPHDPLGGASSLGEATEPDPLRARRQPSADG) is disordered.

The protein belongs to the peptidase M14 family. Zn(2+) serves as cofactor. In placenta, it is present within invasive trophoblasts and in the surrounding extracellular space. Also present in amnion cells, but is not readily apparent in the extracellular matrix of this cell type. Present in normal pituitary gland and neoplastic pituitary gland (especially POMC-, GH- and PRL-producing adenomas) (at protein level). Widely expressed.

Its subcellular location is the secreted. The protein localises to the extracellular space. It localises to the extracellular matrix. With respect to regulation, inhibited by 2-mercaptomethyl-3-guanidinoethylthiopropanoic acid (MGTA) and guanidinoethylmercaptosuccinic acid (GEMSA). Inhibited by chelating agents such as EDTA and EGTA. Functionally, cleaves substrates with C-terminal arginine residues. Probably modulates the Wnt signaling pathway, by cleaving some undefined protein. May play a role in cleavage during prohormone processing. In Homo sapiens (Human), this protein is Carboxypeptidase Z (CPZ).